The chain runs to 181 residues: ATP synthase subunit b 2 (181 aa).

Residues 1–12 (MAEGHGTTAHTG) are compositionally biased toward low complexity. The segment at 1-20 (MAEGHGTTAHTGAEGGHKAP) is disordered. A helical transmembrane segment spans residues 33–53 (LVSLLIAFVALYLIVSKVALP).

It belongs to the ATPase B chain family. As to quaternary structure, F-type ATPases have 2 components, F(1) - the catalytic core - and F(0) - the membrane proton channel. F(1) has five subunits: alpha(3), beta(3), gamma(1), delta(1), epsilon(1). F(0) has three main subunits: a(1), b(2) and c(10-14). The alpha and beta chains form an alternating ring which encloses part of the gamma chain. F(1) is attached to F(0) by a central stalk formed by the gamma and epsilon chains, while a peripheral stalk is formed by the delta and b chains.

It is found in the cell inner membrane. In terms of biological role, f(1)F(0) ATP synthase produces ATP from ADP in the presence of a proton or sodium gradient. F-type ATPases consist of two structural domains, F(1) containing the extramembraneous catalytic core and F(0) containing the membrane proton channel, linked together by a central stalk and a peripheral stalk. During catalysis, ATP synthesis in the catalytic domain of F(1) is coupled via a rotary mechanism of the central stalk subunits to proton translocation. Its function is as follows. Component of the F(0) channel, it forms part of the peripheral stalk, linking F(1) to F(0). The b'-subunit is a diverged and duplicated form of b found in plants and photosynthetic bacteria. The polypeptide is ATP synthase subunit b 2 (atpF2) (Rhodopseudomonas palustris (strain BisA53)).